The primary structure comprises 334 residues: MSQSKGKKRNPGLKIPKEAFEQPQTSSTPPRDLDSKACISIGNQNFEVKADDLEPIMELGRGAYGVVEKMRHVPSGQIMAVKRIRATVNSQEQKRLLMDLDISMRTVDCPFTVTFYGALFREGDVWICMELMDTSLDKFYKQVIDKGQTIPEDILGKIAVSIVKALEHLHSKLSVIHRDVKPSNVLINALGQVKMCDFGISGYLVDSVAKTIDAGCKPYMAPERINPELNQKGYSVKSDIWSLGITMIELAILRFPYDSWGTPFQQLKQVVEEPSPQLPADKFSAEFVDFTSQCLKKNSKERPTYPELMQHPFFTLHESKGTDVASFVKLILGD.

Positions 1–11 are enriched in basic residues; the sequence is MSQSKGKKRNP. The interval 1–34 is disordered; that stretch reads MSQSKGKKRNPGLKIPKEAFEQPQTSSTPPRDLD. The interval 4–19 is d domain; sequence SKGKKRNPGLKIPKEA. The Protein kinase domain occupies 53-314; that stretch reads LEPIMELGRG…YPELMQHPFF (262 aa). ATP-binding positions include 59-67 and lysine 82; that span reads LGRGAYGVV. The active-site Proton acceptor is aspartate 179. Serine 207 carries the (Microbial infection) O-acetylserine; by Yersinia YopJ; alternate modification. At serine 207 the chain carries Phosphoserine; by MAP3K; alternate. Residue threonine 211 is modified to (Microbial infection) O-acetylthreonine; by Yersinia YopJ; alternate. Threonine 211 carries the phosphothreonine; by MAP3K; alternate modification. The segment at 311–334 is DVD domain; it reads HPFFTLHESKGTDVASFVKLILGD.

The protein belongs to the protein kinase superfamily. STE Ser/Thr protein kinase family. MAP kinase kinase subfamily. As to quaternary structure, dimer. Interacts (via its D domain) with its substrates MAPK11, MAPK12, MAPK13 and MAPK14. Interacts (via its DVD domain) with MAP3Ks activators like MAP3K5/ASK1, MAP3K1/MEKK1, MAP3K2/MEKK2, MAP3K3/MEKK3, MAP3K4/MEKK4, MAP3K7/TAK1, MAP3K11/MLK3 and MAP3K17/TAOK2. Interacts with DCTN1. Interacts with EIF2AK2/PKR. (Microbial infection) Interacts with Yersinia YopJ. In terms of processing, weakly autophosphorylated. Phosphorylated at Ser-207 and Thr-211 by the majority of M3Ks, such as MAP3K5/ASK1, MAP3K1/MEKK1, MAP3K2/MEKK2, MAP3K3/MEKK3, MAP3K4/MEKK4, MAP3K7/TAK1, MAP3K11/MLK3 and MAP3K17/TAOK2. Post-translationally, in response to genotoxic stress, MAP3K-phosphorylated MAP2K6 is ubiquitinated and degraded by the SCF(FBXO31) complex. (Microbial infection) Acetylation of Ser-207 and Thr-211 by Yersinia YopJ prevents phosphorylation and activation, thus blocking the MAPK signaling pathway. In terms of tissue distribution, isoform 2 is only expressed in skeletal muscle. Isoform 1 is expressed in skeletal muscle, heart, and in lesser extent in liver or pancreas.

The protein resides in the nucleus. Its subcellular location is the cytoplasm. It localises to the cytoskeleton. It carries out the reaction L-seryl-[protein] + ATP = O-phospho-L-seryl-[protein] + ADP + H(+). It catalyses the reaction L-threonyl-[protein] + ATP = O-phospho-L-threonyl-[protein] + ADP + H(+). The enzyme catalyses L-tyrosyl-[protein] + ATP = O-phospho-L-tyrosyl-[protein] + ADP + H(+). Its activity is regulated as follows. Activated by dual phosphorylation on Ser-207 and Thr-211 in response to a variety of cellular stresses, including UV radiation, osmotic shock, hypoxia, inflammatory cytokines, interferon gamma (IFNG), and less often by growth factors. MAP2K6/MKK6 is activated by the majority of M3Ks, such as MAP3K5/ASK1, MAP3K1/MEKK1, MAP3K2/MEKK2, MAP3K3/MEKK3, MAP3K4/MEKK4, MAP3K7/TAK1, MAP3K11/MLK3 and MAP3K17/TAOK2. Its function is as follows. Dual specificity protein kinase which acts as an essential component of the MAP kinase signal transduction pathway. With MAP3K3/MKK3, catalyzes the concomitant phosphorylation of a threonine and a tyrosine residue in the MAP kinases p38 MAPK11, MAPK12, MAPK13 and MAPK14 and plays an important role in the regulation of cellular responses to cytokines and all kinds of stresses. Especially, MAP2K3/MKK3 and MAP2K6/MKK6 are both essential for the activation of MAPK11 and MAPK13 induced by environmental stress, whereas MAP2K6/MKK6 is the major MAPK11 activator in response to TNF. MAP2K6/MKK6 also phosphorylates and activates PAK6. The p38 MAP kinase signal transduction pathway leads to direct activation of transcription factors. Nuclear targets of p38 MAP kinase include the transcription factors ATF2 and ELK1. Within the p38 MAPK signal transduction pathway, MAP3K6/MKK6 mediates phosphorylation of STAT4 through MAPK14 activation, and is therefore required for STAT4 activation and STAT4-regulated gene expression in response to IL-12 stimulation. The pathway is also crucial for IL-6-induced SOCS3 expression and down-regulation of IL-6-mediated gene induction; and for IFNG-dependent gene transcription. Has a role in osteoclast differentiation through NF-kappa-B transactivation by TNFSF11, and in endochondral ossification and since SOX9 is another likely downstream target of the p38 MAPK pathway. MAP2K6/MKK6 mediates apoptotic cell death in thymocytes. Acts also as a regulator for melanocytes dendricity, through the modulation of Rho family GTPases. The protein is Dual specificity mitogen-activated protein kinase kinase 6 (MAP2K6) of Homo sapiens (Human).